A 250-amino-acid polypeptide reads, in one-letter code: uncharacterized protein (250 aa).

This is an uncharacterized protein from Bacillus subtilis (strain 168).